The chain runs to 153 residues: Large ribosomal subunit protein uL23m (153 aa).

The disordered stretch occupies residues 110 to 153 (IFPEKDKKSKEGSVEEMHEKFMEDERQRQKPDPRRGGVTEWFGL). Residues 111 to 146 (FPEKDKKSKEGSVEEMHEKFMEDERQRQKPDPRRGG) are compositionally biased toward basic and acidic residues.

The protein belongs to the universal ribosomal protein uL23 family. In terms of assembly, component of the mitochondrial ribosome large subunit (39S) which comprises a 16S rRNA and about 50 distinct proteins.

It is found in the mitochondrion. This is Large ribosomal subunit protein uL23m (mrpl23) from Danio rerio (Zebrafish).